The sequence spans 238 residues: ATP synthase subunit a (238 aa).

A run of 5 helical transmembrane segments spans residues 18–38 (LTLL…VFWA), 76–96 (YSLL…LGLF), 114–134 (NLAF…IEGI), 166–186 (SLAI…GLIV), and 193–213 (LYWW…SIFI).

Belongs to the ATPase A chain family. F-type ATPases have 2 components, CF(1) - the catalytic core - and CF(0) - the membrane proton channel. CF(1) has five subunits: alpha(3), beta(3), gamma(1), delta(1), epsilon(1). CF(0) has three main subunits: a(1), b(2) and c(9-12). The alpha and beta chains form an alternating ring which encloses part of the gamma chain. CF(1) is attached to CF(0) by a central stalk formed by the gamma and epsilon chains, while a peripheral stalk is formed by the delta and b chains.

It localises to the cell membrane. In terms of biological role, key component of the proton channel; it plays a direct role in the translocation of protons across the membrane. The chain is ATP synthase subunit a from Streptococcus equi subsp. zooepidemicus (strain H70).